We begin with the raw amino-acid sequence, 454 residues long: G-protein coupled receptor 39 (454 aa).

Over 1 to 34 (MASPSHPSRDCSQVIDHSHVPEFEVATWIKITLI) the chain is Extracellular. Disulfide bonds link cysteine 11–cysteine 191 and cysteine 108–cysteine 210. Zn(2+) is bound by residues histidine 17 and histidine 19. A helical membrane pass occupies residues 35–55 (LVYLVIFVVGILGNSVTIRVT). Residues 56–69 (QVLQKKGYLQKEVT) lie on the Cytoplasmic side of the membrane. A helical transmembrane segment spans residues 70–89 (DHMVSLACSDILVFLIGMPM). Residues 90–109 (EFYSIIWNPLTTPSYTVSCK) lie on the Extracellular side of the membrane. The helical transmembrane segment at 110–131 (VHTFLFEACSYATLLHVLTLSF) threads the bilayer. At 132-151 (ERYIAICHPFRYKAMSGPCQ) the chain is on the cytoplasmic side. Residues 152–172 (VKLLIGFVWVTSALVALPLLF) traverse the membrane as a helical segment. Over 173-217 (AMGVEYPLVNVPSHRGLICNRSRTRHQEQPESSNMSICTNLSSRW) the chain is Extracellular. Residues asparagine 192, asparagine 206, and asparagine 212 are each glycosylated (N-linked (GlcNAc...) asparagine). Residues 218–242 (TVFQSSIFSAFVVYLVVLVSVAFMC) form a helical membrane-spanning segment. Residues 243 to 283 (WSMMQVLRRSKQGTLAAQGQQLQLRKLESQESRSARRQTII) lie on the Cytoplasmic side of the membrane. A helical membrane pass occupies residues 284 to 305 (FLELIVVTLAVCWMPNQVRRIM). The Extracellular segment spans residues 306–323 (AAAKPKHDWTKSYFRAYM). Residues 324–344 (ILLPFSDTFFYLSSVVNPLLY) traverse the membrane as a helical segment. Residues 345-454 (NVSSQQFRSV…TRNGFQEHEV (110 aa)) lie on the Cytoplasmic side of the membrane. Serine 397 carries the post-translational modification Phosphoserine. The disordered stretch occupies residues 415-454 (HSEAKPESKPQELSCESPEPNSERKPANPATRNGFQEHEV).

Belongs to the G-protein coupled receptor 1 family. In terms of assembly, interacts with HTR1A. Interacts with GALR1. As to expression, detected in liver, kidney, abomasum, uterus, small intestine and colon.

The protein localises to the cell membrane. Zinc-sensing receptor that can sense changes in extracellular Zn(2+), mediate Zn(2+) signal transmission, and participates in the regulation of numerous physiological processes including glucose homeostasis regulation, gastrointestinal mobility, hormone secretion and cell death. Activation by Zn(2+) in keratinocytes increases the intracellular concentration of Ca(2+) and activates the ERK/MAPK and PI3K/AKT signaling pathways leading to epithelial repair. Plays an essential role in normal wound healing by inducing the production of cytokines including the major inflammatory cytokine IL6 via the PKC/MAPK/CEBPB pathway. Regulates adipose tissue metabolism, especially lipolysis, and regulates the function of lipases, such as hormone-sensitive lipase and adipose triglyceride lipase. Plays a role in the inhibition of cell death and protects against oxidative, endoplasmic reticulum and mitochondrial stress by inducing secretion of the cytoprotective pigment epithelium-derived growth factor (PEDF) and probably other protective transcripts in a GNA13/RHOA/SRE-dependent manner. Forms dynamic heteroreceptor complexes with HTR1A and GALR1 depending on cell type or specific physiological states, resulting in signaling diversity: HTR1A-GPR39 shows additive increase in signaling along the serum response element (SRE) and NF-kappa-B pathways while GALR1 acts as an antagonist blocking SRE. The sequence is that of G-protein coupled receptor 39 (GPR39) from Bos taurus (Bovine).